We begin with the raw amino-acid sequence, 550 residues long: Chaperonin GroEL (550 aa).

ATP is bound by residues 30-33 (TLGP), K51, 87-91 (DGTTT), G415, and D496. The tract at residues 526–550 (PEDEKMPPMPPGGGMGGMGGMGGMY) is disordered. Over residues 537–550 (GGGMGGMGGMGGMY) the composition is skewed to gly residues.

This sequence belongs to the chaperonin (HSP60) family. As to quaternary structure, forms a cylinder of 14 subunits composed of two heptameric rings stacked back-to-back. Interacts with the co-chaperonin GroES.

It localises to the cytoplasm. The catalysed reaction is ATP + H2O + a folded polypeptide = ADP + phosphate + an unfolded polypeptide.. Its function is as follows. Together with its co-chaperonin GroES, plays an essential role in assisting protein folding. The GroEL-GroES system forms a nano-cage that allows encapsulation of the non-native substrate proteins and provides a physical environment optimized to promote and accelerate protein folding. The sequence is that of Chaperonin GroEL from Chloroherpeton thalassium (strain ATCC 35110 / GB-78).